Here is a 409-residue protein sequence, read N- to C-terminus: 3-dehydro-bile acid delta(4,6)-reductase (409 aa).

Residues Ser12, Glu33, Val131, Glu378, Asn390, and Leu391 each coordinate FAD.

Belongs to the BaiN/RdsA family. BaiN subfamily. FAD is required as a cofactor.

It carries out the reaction 3-oxocholan-24-oyl-CoA + NAD(+) = 3-oxochol-4-en-24-oyl-CoA + NADH + H(+). The catalysed reaction is 3-oxochol-4-en-24-oyl-CoA + NAD(+) = 3-oxochol-4,6-dien-24-oyl-CoA + NADH + H(+). The enzyme catalyses 12alpha-hydroxy-3-oxocholan-24-oyl-CoA + NAD(+) = 12alpha-hydroxy-3-oxochol-4-en-24-oyl-CoA + NADH + H(+). It catalyses the reaction 12alpha-hydroxy-3-oxochol-4-en-24-oyl-CoA + NAD(+) = 12alpha-hydroxy-3-oxochola-4,6-dien-24-oyl-CoA + NADH + H(+). The protein operates within lipid metabolism; bile acid degradation. Involved in the secondary bile acid metabolism. Catalyzes two subsequent reductions of the double bonds within the bile acid A/B rings of 3-oxochol-4,6-dien-24-oyl-CoA and 12alpha-hydroxy-3-oxochol-4,6-dien-24-oyl-CoA to yield 3-oxocholan-24-oyl-CoA and 12alpha-hydroxy-3-oxocholan-24-oyl-CoA, respectively. This is 3-dehydro-bile acid delta(4,6)-reductase from Clostridium scindens (strain ATCC 35704 / DSM 5676 / VPI 13733 / 19).